We begin with the raw amino-acid sequence, 1253 residues long: Structural polyprotein (1253 aa).

The segment at 43–77 (VQAQQMQQLISAVSALTTKQNGKAPKKPKKKPQKA) is host transcription inhibition. Positions 58–110 (LTTKQNGKAPKKPKKKPQKAKAKKNEQQKKNENKKPPPKQKNPAKKKKPGKRE) are disordered. Over residues 66–79 (APKKPKKKPQKAKA) the composition is skewed to basic residues. Residues 70-106 (PKKKPQKAKAKKNEQQKKNENKKPPPKQKNPAKKKKP) carry the Nuclear localization signal motif. The segment covering 80 to 92 (KKNEQQKKNENKK) has biased composition (basic and acidic residues). Residues 90–121 (NKKPPPKQKNPAKKKKPGKRERMCMKIENDCI) form a binding to the viral RNA region. The segment covering 93–108 (PPPKQKNPAKKKKPGK) has biased composition (basic residues). Residues 106 to 120 (PGKRERMCMKIENDC) form a ribosome-binding region. A disulfide bridge links C120 with C135. The Peptidase S3 domain occupies 120-268 (CIFEVKLDGK…RYTPEGTEEW (149 aa)). H146 functions as the Charge relay system in the catalytic mechanism. Positions 151 to 161 (IDNPDLAKLTY) match the Nuclear export signal motif. Residues 162-167 (KKSSKY) are interaction with spike glycoprotein E2. Catalysis depends on D168, which acts as the Charge relay system. The segment at 190-200 (PEGHYNWHHGA) is dimerization of the capsid protein. Catalysis depends on S220, which acts as the Charge relay system. The segment at 226-230 (DNKGR) is dimerization of the capsid protein. The segment at 269–280 (SAALMMCVLANV) is functions as an uncleaved signal peptide for the precursor of protein E3/E2. 3 cysteine pairs are disulfide-bonded: C275/C284, C289/C293, and C292/C324. A glycan (N-linked (GlcNAc...) asparagine; by host) is linked at N279. Residue N325 is glycosylated (N-linked (GlcNAc...) asparagine; by host). Over 333–694 (SVTKHFNVYK…EIILYYYGLY (362 aa)) the chain is Extracellular. Intrachain disulfides connect C351–C457, C354–C360, C423–C437, C485–C597, C533–C557, and C535–C552. Interaction with host Mxra8 receptor stretches follow at residues 358 to 361 (QFCY) and 394 to 396 (HEH). The interaction with host Mxra8 receptor stretch occupies residues 516 to 519 (QSGN). N-linked (GlcNAc...) asparagine; by host glycosylation is present at N532. The interval 548–554 (TINSCKI) is interaction with host Mxra8 receptor. An N-linked (GlcNAc...) asparagine; by host glycan is attached at N594. A helical transmembrane segment spans residues 695-715 (PAATIAAVSAAGLAVVLSLLA). The Cytoplasmic portion of the chain corresponds to 716-754 (SCYMFATARRKCLTPYALTPGAVVPVTLGVLCCAPRAHA). A lipid anchor (S-stearoyl cysteine; by host) is attached at C717. The tract at residues 722-726 (TARRK) is interaction with the capsid protein. C727 is lipidated: S-stearoyl cysteine; by host. Residues 727–747 (CLTPYALTPGAVVPVTLGVLC) are transient transmembrane before p62-6K protein processing. C727 and C748 are disulfide-bonded. Residues C747 and C748 are each lipidated (S-palmitoyl cysteine; by host). At 755–769 (ASFAESMAYLWDENQ) the chain is on the extracellular side. N-linked (GlcNAc...) asparagine; by host glycosylation is present at N768. A helical membrane pass occupies residues 770-790 (TLFWLELATPLAAIIILVCCL). Over 791–792 (KN) the chain is Cytoplasmic. Residues 793–813 (LLCCCKPLSFLVLVSLGTPVV) traverse the membrane as a helical segment. 2 consecutive stretches face the extracellular side: residues 814 to 815 (KS) and 826 to 1227 (VGFP…WVQR). Disulfide bonds link C864/C929, C877/C909, C878/C911, and C883/C893. The E1 fusion peptide loop stretch occupies residues 899-916 (VYPFMWGGAYCFCDTENT). Residues N956 and N1085 are each glycosylated (N-linked (GlcNAc...) asparagine; by host). Disulfide bonds link C1074–C1086, C1116–C1191, C1121–C1195, and C1143–C1185. Residues 1228–1248 (VAGGLGGLTLAAVAVLILVTC) traverse the membrane as a helical segment. C1248 carries the S-palmitoyl cysteine; by host lipid modification. Residues 1249–1253 (VTMRR) are Cytoplasmic-facing.

In terms of assembly, homodimer. Homomultimer. Interacts with host karyopherin KPNA4; this interaction allows the nuclear import of the viral capsid protein. Interacts with spike glycoprotein E2. Interacts with host IRAK1; the interaction leads to inhibition of IRAK1-dependent signaling. As to quaternary structure, the precursor of protein E3/E2 and E1 form a heterodimer shortly after synthesis. Interacts with spike glycoprotein E2. The precursor of protein E3/E2 and E1 form a heterodimer shortly after synthesis. Processing of the precursor of protein E3/E2 into E2 and E3 results in a heterodimer of the spike glycoproteins E2 and E1. Spike at virion surface are constituted of a trimer of E2-E1 heterodimers. After target cell attachment and endocytosis, E1 change conformation to form homotrimers. Interacts with 6K protein. E1/E2 heterodimer interacts with host LDLR. In terms of assembly, interacts with spike glycoprotein E1. Processing of the precursor of protein E3/E2 into E2 and E3 results in a heterodimer of the spike glycoproteins E2 and E1. Spike at virion surface are constituted of a trimer of E2-E1 heterodimers. Interacts with 6K protein. Interacts with host MXRA8; this interaction mediates virus entry. As to quaternary structure, oligomer. Interacts with spike glycoprotein E1. Interacts with spike glycoprotein E2. Post-translationally, structural polyprotein: Specific enzymatic cleavages in vivo yield mature proteins. Capsid protein is auto-cleaved during polyprotein translation, unmasking a signal peptide at the N-terminus of the precursor of E3/E2. The remaining polyprotein is then targeted to the host endoplasmic reticulum, where host signal peptidase cleaves it into pE2, 6K and E1 proteins. pE2 is further processed to mature E3 and E2 by host furin in trans-Golgi vesicle. Palmitoylated via thioester bonds. These palmitoylations may induce disruption of the C-terminus transmembrane. This would result in the reorientation of E2 C-terminus from lumenal to cytoplasmic side. In terms of processing, N-glycosylated. Post-translationally, palmitoylated via thioester bonds.

Its subcellular location is the virion. The protein localises to the host cytoplasm. It localises to the host cell membrane. The protein resides in the host nucleus. It is found in the virion membrane. Its subcellular location is the host Golgi apparatus. The protein localises to the host trans-Golgi network. It localises to the host endoplasmic reticulum. The catalysed reaction is Autocatalytic release of the core protein from the N-terminus of the togavirus structural polyprotein by hydrolysis of a -Trp-|-Ser- bond.. Functionally, forms an icosahedral capsid with a T=4 symmetry composed of 240 copies of the capsid protein surrounded by a lipid membrane through which penetrate 80 spikes composed of trimers of E1-E2 heterodimers. The capsid protein binds to the viral RNA genome at a site adjacent to a ribosome binding site for viral genome translation following genome release. Possesses a protease activity that results in its autocatalytic cleavage from the nascent structural protein. Following its self-cleavage, the capsid protein transiently associates with ribosomes, and within several minutes the protein binds to viral RNA and rapidly assembles into icosahedric core particles. The resulting nucleocapsid eventually associates with the cytoplasmic domain of the spike glycoprotein E2 at the cell membrane, leading to budding and formation of mature virions. In case of infection, new virions attach to target cells and after clathrin-mediated endocytosis their membrane fuses with the host endosomal membrane. This leads to the release of the nucleocapsid into the cytoplasm, followed by an uncoating event necessary for the genomic RNA to become accessible. The uncoating might be triggered by the interaction of capsid proteins with ribosomes. Binding of ribosomes would release the genomic RNA since the same region is genomic RNA-binding and ribosome-binding. Specifically inhibits interleukin-1 receptor-associated kinase 1/IRAK1-dependent signaling during viral entry, representing a means by which the alphaviruses may evade innate immune detection and activation prior to viral gene expression. In terms of biological role, provides the signal sequence for the translocation of the precursor of protein E3/E2 to the host endoplasmic reticulum. Furin-cleaved E3 remains associated with spike glycoprotein E1 and mediates pH protection of the latter during the transport via the secretory pathway. After virion release from the host cell, the assembly protein E3 is gradually released in the extracellular space. Its function is as follows. Plays a role in viral attachment to target host cell, by binding to the cell receptor MXRA8. The host LDLR may also act as a cell receptor for viral entry. Synthesized as a p62 precursor which is processed by furin at the cell membrane just before virion budding, giving rise to E2-E1 heterodimer. The p62-E1 heterodimer is stable, whereas E2-E1 is unstable and dissociate at low pH. p62 is processed at the last step, presumably to avoid E1 fusion activation before its final export to cell surface. E2 C-terminus contains a transitory transmembrane that would be disrupted by palmitoylation, resulting in reorientation of the C-terminal tail from lumenal to cytoplasmic side. This step is critical since E2 C-terminus is involved in budding by interacting with capsid proteins. This release of E2 C-terminus in cytoplasm occurs lately in protein export, and precludes premature assembly of particles at the endoplasmic reticulum membrane. Acts as a viroporin that participates in virus glycoprotein processing and transport to the plasma membrane, cell permeabilization and budding of viral particles. Disrupts the calcium homeostasis of the cell, probably at the endoplasmic reticulum level. This leads to cytoplasmic calcium elevation. Because of its lipophilic properties, the 6K protein is postulated to influence the selection of lipids that interact with the transmembrane domains of the glycoproteins, which, in turn, affects the deformability of the bilayer required for the extreme curvature that occurs as budding proceeds. Present in low amount in virions, about 3% compared to viral glycoproteins. Functionally, class II viral fusion protein. Fusion activity is inactive as long as E1 is bound to E2 in mature virion. After virus attachment to target cell via host MXRA8 and endocytosis, acidification of the endosome induce dissociation of E1/E2 heterodimer and concomitant trimerization of the E1 subunits. This E1 trimer is fusion active, and promotes release of viral nucleocapsid in cytoplasm after endosome and viral membrane fusion. Efficient fusion requires the presence of cholesterol and sphingolipid in the target membrane. This Aedes vexans (Inland floodwater mosquito) protein is Structural polyprotein.